The following is a 185-amino-acid chain: Ribosome-recycling factor (185 aa).

Belongs to the RRF family.

It localises to the cytoplasm. Its function is as follows. Responsible for the release of ribosomes from messenger RNA at the termination of protein biosynthesis. May increase the efficiency of translation by recycling ribosomes from one round of translation to another. This Desulforapulum autotrophicum (strain ATCC 43914 / DSM 3382 / VKM B-1955 / HRM2) (Desulfobacterium autotrophicum) protein is Ribosome-recycling factor.